We begin with the raw amino-acid sequence, 202 residues long: tRNA (pseudouridine(54)-N(1))-methyltransferase (202 aa).

The S-adenosyl-L-methionine site is built by Leu-134 and Gly-155.

The protein belongs to the methyltransferase superfamily. TrmY family. In terms of assembly, homodimer.

The protein resides in the cytoplasm. The catalysed reaction is pseudouridine(54) in tRNA + S-adenosyl-L-methionine = N(1)-methylpseudouridine(54) in tRNA + S-adenosyl-L-homocysteine + H(+). Its function is as follows. Specifically catalyzes the N1-methylation of pseudouridine at position 54 (Psi54) in tRNAs. The polypeptide is tRNA (pseudouridine(54)-N(1))-methyltransferase (Thermococcus gammatolerans (strain DSM 15229 / JCM 11827 / EJ3)).